The primary structure comprises 326 residues: Adenosine receptor A1 (326 aa).

Over 1–10 (MPPSISAFQA) the chain is Extracellular. Residues 11–33 (AYIGIEVLIALVSVPGNVLVIWA) form a helical membrane-spanning segment. Topologically, residues 34 to 46 (VKVNQALRDATFC) are cytoplasmic. The helical transmembrane segment at 47–69 (FIVSLAVADVAVGALVIPLAILI) threads the bilayer. The Extracellular portion of the chain corresponds to 70 to 80 (NIGPRTYFHTC). A disulfide bridge links cysteine 80 with cysteine 169. The helical transmembrane segment at 81 to 102 (LKVACPVLILTQSSILALLAIA) threads the bilayer. Topologically, residues 103 to 123 (VDRYLRVKIPLRYKTVVTPRR) are cytoplasmic. Residues 124–146 (AVVAITGCWILSFVVGLTPMFGW) form a helical membrane-spanning segment. Residues 147–176 (NNLSAVERDWLANGSVGEPVIECQFEKVIS) lie on the Extracellular side of the membrane. Asparagine 148 and asparagine 159 each carry an N-linked (GlcNAc...) asparagine glycan. Residues 177–201 (MEYMVYFNFFVWVLPPLLLMVLIYM) form a helical membrane-spanning segment. Topologically, residues 202 to 235 (EVFYLIRKQLNKKVSASSGDPQKYYGKELKIAKS) are cytoplasmic. A helical transmembrane segment spans residues 236 to 259 (LALILFLFALSWLPLHILNCITLF). At 260-267 (CPSCHMPR) the chain is on the extracellular side. A helical membrane pass occupies residues 268–292 (ILIYIAIFLSHGNSAMNPIVYAFRI). Residues 293 to 326 (QKFRVTFLKIWNDHFRCQPAPPVDEDAPAERPDD) lie on the Cytoplasmic side of the membrane. Cysteine 309 is lipidated: S-palmitoyl cysteine.

The protein belongs to the G-protein coupled receptor 1 family.

Its subcellular location is the cell membrane. In terms of biological role, receptor for adenosine. The activity of this receptor is mediated by G proteins which inhibit adenylyl cyclase. The protein is Adenosine receptor A1 (ADORA1) of Bos taurus (Bovine).